A 175-amino-acid chain; its full sequence is NADH-quinone oxidoreductase subunit I 1 (175 aa).

2 4Fe-4S ferredoxin-type domains span residues 44–74 (LNRWPDGLEKCIGCELCAWACPADAIFVESA) and 90–119 (RVYQINYLRCIGCGFCIEACPTRALTMIND). [4Fe-4S] cluster is bound by residues Cys-54, Cys-57, Cys-60, Cys-64, Cys-99, Cys-102, Cys-105, and Cys-109.

Belongs to the complex I 23 kDa subunit family. NDH-1 is composed of 14 different subunits. Subunits NuoA, H, J, K, L, M, N constitute the membrane sector of the complex. It depends on [4Fe-4S] cluster as a cofactor.

It is found in the cell membrane. It catalyses the reaction a quinone + NADH + 5 H(+)(in) = a quinol + NAD(+) + 4 H(+)(out). In terms of biological role, NDH-1 shuttles electrons from NADH, via FMN and iron-sulfur (Fe-S) centers, to quinones in the respiratory chain. The immediate electron acceptor for the enzyme in this species is believed to be menaquinone. Couples the redox reaction to proton translocation (for every two electrons transferred, four hydrogen ions are translocated across the cytoplasmic membrane), and thus conserves the redox energy in a proton gradient. The protein is NADH-quinone oxidoreductase subunit I 1 of Mycolicibacterium paratuberculosis (strain ATCC BAA-968 / K-10) (Mycobacterium paratuberculosis).